The following is a 65-amino-acid chain: Small hydrophobic protein (65 aa).

The Intravirion segment spans residues 1–20 (MGNTSITIEFTSKFWPYFTL). Positions 6-15 (ITIEFTSKFW) are interaction with host BCAP31. The chain crosses the membrane as a helical; Signal-anchor for type II membrane protein span at residues 21–44 (IHMILTPISLLIIITIMIAILNKL). The interval 38-43 (IAILNK) is interaction with small-molecule inhibitor. Residues 45–65 (SEHKTFCNKTLELGQMYQINT) lie on the Virion surface side of the membrane. The N-linked (GlcNAc...) asparagine; by host glycan is linked to Asn-52.

It belongs to the orthopneumovirus small hydrophobic protein family. In terms of assembly, homopentamer forming a funnel-like pore. Interacts with glycoprotein G; this interaction occurs on the surface of virion particles and infected cells. Interacts with host BCAP31 (via C-terminus); this interaction is direct. Four species of SH have been detected in infected cell cytoplasm: a 7.5 kDa non-glycosylated form (SH0), a 13-15 kDa form that contains one or two N-linked carbohydrate side chains of the high-mannose type (SHg), a 21-30 kDa polylactosaminoglycan-modified form of the protein (SHp), and the isoform generated by alternative translational initiation. Of these different forms, SH0 is by far the most abundant protein detected during virus infection. Post-translationally, tyrosine phosphorylated.

Its subcellular location is the virion membrane. The protein resides in the host cell membrane. The protein localises to the host Golgi apparatus membrane. It localises to the host endoplasmic reticulum membrane. Its activity is regulated as follows. Channel activity is inhibited by copper. Also inhibited by small-molecule pyronin B. Functionally, viroporin that forms a homopentameric ion channel displaying low ion selectivity. May play a role in virus morphogenesis and pathogenicity at various stages of the viral life cycle. Accumulates at the membrane of the Golgi apparatus in infected cells and may facilitate virus release by modifying the secretory pathway. May enhance host membrane permeability and disrupt cellular ion homeostasis, which can be sensed as damage-associated molecular patterns/danger signals, triggering NLRP3 inflammasome activation and inflammatory immune response. Also inhibits host TNFA-mediated signaling pathway and may delay apoptosis, allowing time for the virus to replicate. This Human respiratory syncytial virus B (strain 18537) protein is Small hydrophobic protein.